The following is a 187-amino-acid chain: Keratin-associated protein 5-8 (187 aa).

Tandem repeats lie at residues 28–31 (CCVP), 34–37 (CCKP), 40–43 (CCVP), 109–112 (CCKP), 119–122 (CCKP), 138–141 (CCKP), 148–151 (CCKP), 167–170 (CCKP), and 177–180 (CCVP). The tract at residues 28 to 180 (CCVPICCCKP…CCSQSSCCVP (153 aa)) is 9 X 4 AA repeats of C-C-X-P.

This sequence belongs to the KRTAP type 5 family. Restricted to hair root, not detected in any other tissues. Expressed in cuticle layers of differentiating hair follicles.

In the hair cortex, hair keratin intermediate filaments are embedded in an interfilamentous matrix, consisting of hair keratin-associated protein (KRTAP), which are essential for the formation of a rigid and resistant hair shaft through their extensive disulfide bond cross-linking with abundant cysteine residues of hair keratins. The matrix proteins include the high-sulfur and high-glycine-tyrosine keratins. This Homo sapiens (Human) protein is Keratin-associated protein 5-8 (KRTAP5-8).